Consider the following 446-residue polypeptide: Probable D-serine dehydratase (446 aa).

Residue Lys116 is modified to N6-(pyridoxal phosphate)lysine.

It belongs to the serine/threonine dehydratase family. DsdA subfamily. Pyridoxal 5'-phosphate is required as a cofactor.

The catalysed reaction is D-serine = pyruvate + NH4(+). The chain is Probable D-serine dehydratase from Bacillus anthracis (strain CDC 684 / NRRL 3495).